A 258-amino-acid chain; its full sequence is uncharacterized protein (258 aa).

Helical transmembrane passes span 33-53 (LFVIFQVIISIVLLSLSVTTN), 59-79 (FDSWYYFASHLILSLFGIFVF), 88-108 (LLYLYVILLSGLLITASFSFF), and 140-160 (IIALIVVEGVALHPNLSWLIQ). The segment at 237-258 (NNKINSELQPPSILNKNSKPIE) is disordered. A compositionally biased stretch (polar residues) spans 242–258 (SELQPPSILNKNSKPIE).

The protein localises to the membrane. This is an uncharacterized protein from Dictyostelium discoideum (Social amoeba).